A 685-amino-acid chain; its full sequence is MARLRVYELAKQLDMDTKELLHELEELGIEVKSHMSFIDEETVNILLDIYKQTLDEEEDISLAKTREPSKEKTEAKKPPVHITEADLKLDKFAEKIKIPQNRIIQDFFMKGEILKPGQTISISLAKKIAKMYDVRLTFEEDETAVKEQPKLENPLDELKRQFEEIYQNNKDKLVNRPPVVTVMGHVDHGKTTLLDYIRKTRVAEKEEGGITQSVGAYQVIVNGKKITFIDTPGHEVFTEMRARGAQATDIVVLVVAADDGVMPQTIEAYNHAKSANVPIIVAINKIDKANANVDMTKQELVTKLNLIPEDWGGDTIVVPISARNGINVDTLLEMILLVAEMQDIRCIPDSPVRAVTIETRLDKGYGPVANAIVKDGVLKVGDYVVAGKVFGKVKALIDDKGKRLKEAEPSTPVMIVGFEELPDPHSIIYVVDSKEKALEIVEKVREIEARELRKKRQVKLEEILKRMQETEKRELKLILKADTVGSLQALQNAIAKLRTNEIDIDIVHSAVGAINSSDIMLASASEAIILGFRVKADNQASKLAESEGVQIKTYTIIYKLLEDLKAALEGMLEPEEVEEKTGYGEIKKAFKIHKYGNIAGVQMYDGYVDKSGFVRIYRNGALVFEGKIESLKHYQQDVNKVSAPQECGIKFQNFDDIKEGDELEFYIIKKIPRKLTIIEEEKQQI.

Residues 60-79 (ISLAKTREPSKEKTEAKKPP) are disordered. Residues 64 to 79 (KTREPSKEKTEAKKPP) show a composition bias toward basic and acidic residues. Residues 175–352 (NRPPVVTVMG…DIRCIPDSPV (178 aa)) form the tr-type G domain. A G1 region spans residues 184 to 191 (GHVDHGKT). Position 184–191 (184–191 (GHVDHGKT)) interacts with GTP. Positions 209–213 (GITQS) are G2. The interval 230 to 233 (DTPG) is G3. Residues 230–234 (DTPGH) and 284–287 (NKID) each bind GTP. The tract at residues 284–287 (NKID) is G4. Positions 321–323 (SAR) are G5.

The protein belongs to the TRAFAC class translation factor GTPase superfamily. Classic translation factor GTPase family. IF-2 subfamily.

Its subcellular location is the cytoplasm. Its function is as follows. One of the essential components for the initiation of protein synthesis. Protects formylmethionyl-tRNA from spontaneous hydrolysis and promotes its binding to the 30S ribosomal subunits. Also involved in the hydrolysis of GTP during the formation of the 70S ribosomal complex. The polypeptide is Translation initiation factor IF-2 (Fervidobacterium nodosum (strain ATCC 35602 / DSM 5306 / Rt17-B1)).